A 433-amino-acid polypeptide reads, in one-letter code: Histidine--tRNA ligase (433 aa).

The protein belongs to the class-II aminoacyl-tRNA synthetase family. Homodimer.

It is found in the cytoplasm. The enzyme catalyses tRNA(His) + L-histidine + ATP = L-histidyl-tRNA(His) + AMP + diphosphate + H(+). The protein is Histidine--tRNA ligase of Blochmanniella floridana.